The chain runs to 252 residues: Nuclease C1 (252 aa).

The active-site Proton acceptor is His87. Asn119 is a binding site for Mg(2+).

Belongs to the DNA/RNA non-specific endonuclease family. It depends on Mg(2+) as a cofactor. The cofactor is Mn(2+).

Its subcellular location is the secreted. In terms of biological role, this enzyme has both RNase and DNase activity. The polypeptide is Nuclease C1 (NUC1CE) (Cunninghamella echinulata var. echinulata).